We begin with the raw amino-acid sequence, 243 residues long: BTB/POZ domain-containing protein At4g08455 (243 aa).

A coiled-coil region spans residues 19–51 (KECYVEAGETEEELKREIDDLKAKVAFLRLSSS). Residues 64–136 (TDVVLIASED…LYTAEACLDE (73 aa)) enclose the BTB domain.

Interacts with CUL3A and CUL3B.

The protein operates within protein modification; protein ubiquitination. Its function is as follows. May act as a substrate-specific adapter of an E3 ubiquitin-protein ligase complex (CUL3-RBX1-BTB) which mediates the ubiquitination and subsequent proteasomal degradation of target proteins. The polypeptide is BTB/POZ domain-containing protein At4g08455 (Arabidopsis thaliana (Mouse-ear cress)).